A 743-amino-acid chain; its full sequence is Tudor domain-containing protein 3 (743 aa).

The segment at 241 to 262 is disordered; sequence KTFGGGGGGARSNLNIGAAGHR. The region spanning 286–326 is the UBA domain; that stretch reads LVDEKALKHITEMGFSKEASRQALMDNANNLEAALNVLLNS. Disordered regions lie at residues 327–365 and 380–549; these read SKQKPAVGPPARGRGKGRGRGRSEDEEDLGTARPSAPST and EEPK…CYER. Phosphoserine is present on Ser349. Basic and acidic residues predominate over residues 414 to 431; it reads PRNDTRQPRNERPPRFQK. The segment covering 432–445 has biased composition (polar residues); that stretch reads DTPTSKSTVENSVL. Ser438 bears the Phosphoserine mark. Composition is skewed to basic and acidic residues over residues 464-484 and 536-549; these read AEERIKCDRPYSRYDRTKDAS and RENQTGHPDHCYER. Lys563 is covalently cross-linked (Glycyl lysine isopeptide (Lys-Gly) (interchain with G-Cter in SUMO2)). The disordered stretch occupies residues 572 to 603; sequence TDYPRPVQSNSLGVPNGETAPPLKGRRVGPIK. The 61-residue stretch at 647–707 folds into the Tudor domain; it reads VWKPGDECFA…KPVQTEAWEE (61 aa). Residues 711 to 725 are compositionally biased toward basic and acidic residues; it reads YDHTIEFRRGGDGQP. The tract at residues 711–743 is disordered; that stretch reads YDHTIEFRRGGDGQPRRSTRPTQQFYQPPRARN. The tract at residues 723–743 is EBM motif; may mediate interaction with the EJC; it reads GQPRRSTRPTQQFYQPPRARN.

In terms of assembly, component of mRNA stress granules. Interacts with FMR1, FXR1, FXR2, EWSR1, FUS, SERBP1, EEF1A1 and DDX3X or DDX3Y, and with the small nuclear ribonucleoprotein-associated proteins SNRPB and SNRPN. Interacts with 'Lys-48'-linked tetra-ubiquitin, but not with monoubiquitin or 'Lys-63'-linked ubiquitin chains. May interact with the exon junction complex (EJC) composed at least of CASC3, EIF4A3, MAGOH and RBM8A. Interacts with POLR2A (via the C-terminal domain (CTD)).

It is found in the cytoplasm. The protein resides in the nucleus. In terms of biological role, scaffolding protein that specifically recognizes and binds dimethylarginine-containing proteins. Plays a role in the regulation of translation of target mRNAs by binding Arg/Gly-rich motifs (GAR) in dimethylarginine-containing proteins. In nucleus, acts as a coactivator: recognizes and binds asymmetric dimethylation on the core histone tails associated with transcriptional activation (H3R17me2a and H4R3me2a) and recruits proteins at these arginine-methylated loci. In cytoplasm, acts as an antiviral factor that participates in the assembly of stress granules together with G3BP1. This is Tudor domain-containing protein 3 (Tdrd3) from Mus musculus (Mouse).